Here is a 178-residue protein sequence, read N- to C-terminus: ATP-dependent protease subunit HslV (178 aa).

Thr-5 is a catalytic residue. Residues Gly-161, Cys-164, and Thr-167 each coordinate Na(+).

This sequence belongs to the peptidase T1B family. HslV subfamily. A double ring-shaped homohexamer of HslV is capped on each side by a ring-shaped HslU homohexamer. The assembly of the HslU/HslV complex is dependent on binding of ATP.

It localises to the cytoplasm. It carries out the reaction ATP-dependent cleavage of peptide bonds with broad specificity.. With respect to regulation, allosterically activated by HslU binding. Functionally, protease subunit of a proteasome-like degradation complex believed to be a general protein degrading machinery. This is ATP-dependent protease subunit HslV from Aliarcobacter butzleri (strain RM4018) (Arcobacter butzleri).